A 440-amino-acid polypeptide reads, in one-letter code: D-serine dehydratase (440 aa).

Position 116 is an N6-(pyridoxal phosphate)lysine (lysine 116).

Belongs to the serine/threonine dehydratase family. DsdA subfamily. As to quaternary structure, monomer. Requires pyridoxal 5'-phosphate as cofactor.

The enzyme catalyses D-serine = pyruvate + NH4(+). The protein is D-serine dehydratase of Salmonella enteritidis PT4 (strain P125109).